A 122-amino-acid polypeptide reads, in one-letter code: MGDNNQATTGFDPAANAPDAAAWDKGKGKATDPTQDMRMDDDESDESEAEEMIDDDDDEDNDTLEPISSDNIISGGRRTRGKTIDFQAAAESLKDDGMDEDDDEDDDYVGAGDDDEDNKMQD.

Residues 1–122 (MGDNNQATTG…DDDEDNKMQD (122 aa)) are disordered. The segment covering 12 to 21 (DPAANAPDAA) has biased composition (low complexity). The span at 22–38 (AWDKGKGKATDPTQDMR) shows a compositional bias: basic and acidic residues. Acidic residues-rich tracts occupy residues 39-63 (MDDD…DNDT) and 97-122 (GMDE…KMQD).

The protein belongs to the CHZ1 family. As to quaternary structure, forms a heterotrimer with H2A.Z-H2B, stabilizing the association of the histone dimer. Also, with a lower affinity, forms a heterotrimer with H2A-H2B.

It localises to the nucleus. Forms a chaperone-bound H2A.Z-H2B complex that acts as a source for SWR1 complex-dependent H2A to H2A.Z histone replacement in chromatin. In Aspergillus niger (strain ATCC MYA-4892 / CBS 513.88 / FGSC A1513), this protein is Histone H2A.Z-specific chaperone chz1 (chz1).